We begin with the raw amino-acid sequence, 499 residues long: MLSTSSRSFKNKFRAAFWPVHNYELGKFIPMSTLMFCILFNQNVLRILKDSILISEISAEIAGFAKVYCVTPAAALFVIIYAKMINYLTFEKIFYYLSAFFISFFVLFTFVIYPNIHIFHVHPNNLADWMERYPHFKWYISLVGNWGYIVYYSLAELWPNIFYVLLFWQFANELTTTEEAKRFYTLFSLFGNSSLILVGFLMMNLSSEDTIIKKFMSISDSKITLVQVSTTIVAIVAIICCLLVRFISKNVFTNPLFYAKAKSGRSTSERMGLIKSFKYIAKSKYLWLLLICSAAFGFAINLVEAVWKAKIKELYPTVNTYAEFNSLYILWTGVAIMVMTIIGNNIMRMHNWFVAAVISPVIIMVTGILFFVLIVFDQQILSLFDGAILMSPLALAVSIGGIQNILAKGTKYSIWDTSREMLYIPLDEELKTKGKAAVDVISAKVGKSSSGLVQSIIFTLVPTATFTLISPILMVVFTFVCLAWIYAVRKIYCEYQKIA.

11 helical membrane passes run 25 to 45, 61 to 81, 93 to 113, 148 to 168, 183 to 203, 223 to 243, 286 to 306, 327 to 347, 356 to 376, 380 to 400, and 468 to 488; these read LGKFIPMSTLMFCILFNQNVL, IAGFAKVYCVTPAAALFVIIY, IFYYLSAFFISFFVLFTFVIY, YIVYYSLAELWPNIFYVLLFW, FYTLFSLFGNSSLILVGFLMM, ITLVQVSTTIVAIVAIICCLL, LWLLLICSAAFGFAINLVEAV, LYILWTGVAIMVMTIIGNNIM, AVISPVIIMVTGILFFVLIVF, ILSLFDGAILMSPLALAVSIG, and LISPILMVVFTFVCLAWIYAV.

The protein belongs to the ADP/ATP translocase tlc family.

It is found in the cell membrane. Its function is as follows. Provides the rickettsial cell with host ATP in exchange for rickettsial ADP. This is an obligate exchange system. This energy acquiring activity is an important component of rickettsial parasitism. This chain is ADP,ATP carrier protein 5 (tlcE), found in Rickettsia conorii (strain ATCC VR-613 / Malish 7).